A 231-amino-acid polypeptide reads, in one-letter code: Ribose-5-phosphate isomerase A (231 aa).

Substrate-binding positions include 28–31, 83–86, and 96–99; these read TGST, DGAD, and KGGG. Glu105 serves as the catalytic Proton acceptor. Lys123 provides a ligand contact to substrate.

The protein belongs to the ribose 5-phosphate isomerase family. In terms of assembly, homodimer.

The enzyme catalyses aldehydo-D-ribose 5-phosphate = D-ribulose 5-phosphate. It participates in carbohydrate degradation; pentose phosphate pathway; D-ribose 5-phosphate from D-ribulose 5-phosphate (non-oxidative stage): step 1/1. In terms of biological role, catalyzes the reversible conversion of ribose-5-phosphate to ribulose 5-phosphate. This Sinorhizobium fredii (strain NBRC 101917 / NGR234) protein is Ribose-5-phosphate isomerase A.